The following is a 274-amino-acid chain: MPKYCRAPNCSNTAGRLGADNRPVSFYKFPLKDGPRLQAWLQHMGCEHWVPSCHQHLCSEHFTPSCFQWRWGVRYLRPDAVPSIFSRGPPAKSQRRTRSTQKPVSPPPPLQKNTPLPQSPAIPVSGPVRLVVLGPTSGSPKTVATMLLTPLAPAPTPERSQPEVPAQQAQTGLGPVLGALQRRVRRLQRCQERHQAQLQALERLAQQLHGESLLARARRGLQRLTTAQTLGPEESQTFTIICGGPDIAMVLAQDPAPATVDAKPELLDTRIPSA.

A THAP-type zinc finger spans residues 1–85 (MPKYCRAPNC…LRPDAVPSIF (85 aa)). The segment at 83 to 121 (SIFSRGPPAKSQRRTRSTQKPVSPPPPLQKNTPLPQSPA) is disordered.

In Homo sapiens (Human), this protein is THAP domain-containing protein 8 (THAP8).